Here is a 769-residue protein sequence, read N- to C-terminus: Sensor protein DivL (769 aa).

Residues 6 to 26 form a helical membrane-spanning segment; that stretch reads LILAAAAGAVCLAISVALWSH. In terms of domain architecture, Histidine kinase spans 547–758; it reads NVSYELRTPL…TFTCHLPETQ (212 aa). Y550 carries the post-translational modification Phosphotyrosine; by autocatalysis.

Autophosphorylated.

It is found in the cell membrane. The catalysed reaction is ATP + protein L-histidine = ADP + protein N-phospho-L-histidine.. Its function is as follows. Required for cell division and growth. It catalyzes the phosphorylation of CtrA and activates transcription in vitro of the cell cycle-regulated fliF promoter. The protein is Sensor protein DivL (divL) of Caulobacter vibrioides (strain ATCC 19089 / CIP 103742 / CB 15) (Caulobacter crescentus).